The chain runs to 62 residues: MKTIVLLFVLALVFCTLEMGIVEAGFGCPFNQGQCHKHCQSIRRRGGYCDGFLKQRCVCYRK.

A signal peptide spans M1 to A24. 3 disulfide bridges follow: C28–C49, C35–C57, and C39–C59.

Belongs to the invertebrate defensin family. Type 2 subfamily.

It localises to the secreted. Dual-function peptide with antimicrobial and potassium channel-blocking activities. Shows inhibitory activity against Gram-positive bacteria such as S.aureus, B.subtilis, and M.luteus as well as methicillin-resistant S.aureus (MIC=0.1-20 uM). Does not act on bacteria by disrupting membranes. Also moderately inhibits Kv1.1/KCNA1 (25.2% inhibition at 1 uM), Kv1.2/KCNA2 (30.5% inhibition at 1 uM), and Kv1.3/KCNA3 potassium channels (IC(50)=510.2 nM, 61% inhibition at 1 uM). Inhibits potassium channels by interacting with the pore region. Does not show hemolytic activity. In vitro, dose-dependently decreases the production of Hepatitis B virus (HBV) DNA and HBV viral proteins in both culture medium and cell lysate. The polypeptide is Defensin BmKDfsin4 (Olivierus martensii (Manchurian scorpion)).